Here is a 210-residue protein sequence, read N- to C-terminus: Na(+)-translocating NADH-quinone reductase subunit D (210 aa).

The next 6 membrane-spanning stretches (helical) occupy residues 10-30, 42-62, 72-92, 103-123, 131-151, and 178-198; these read VLIG…GVCS, LVMT…ISLI, IIVQ…VLQA, VFVG…AYAM, FMDG…VGFV, and NGLL…IWII.

It belongs to the NqrDE/RnfAE family. In terms of assembly, composed of six subunits; NqrA, NqrB, NqrC, NqrD, NqrE and NqrF.

The protein localises to the cell inner membrane. The catalysed reaction is a ubiquinone + n Na(+)(in) + NADH + H(+) = a ubiquinol + n Na(+)(out) + NAD(+). Functionally, NQR complex catalyzes the reduction of ubiquinone-1 to ubiquinol by two successive reactions, coupled with the transport of Na(+) ions from the cytoplasm to the periplasm. NqrA to NqrE are probably involved in the second step, the conversion of ubisemiquinone to ubiquinol. The chain is Na(+)-translocating NADH-quinone reductase subunit D from Shewanella pealeana (strain ATCC 700345 / ANG-SQ1).